The following is a 402-amino-acid chain: NADH dehydrogenase [ubiquinone] 1 alpha subcomplex subunit 9, mitochondrial (402 aa).

The transit peptide at 1 to 43 (MQVVSRRLVQRPLVGGASIYSSSSLRSLYGVSNHLNGTDNCRY) directs the protein to the mitochondrion.

This sequence belongs to the complex I NDUFA9 subunit family. In terms of assembly, complex I is composed of at least 49 different subunits. This a component of the hydrophobic protein fraction. The cofactor is FAD.

The protein resides in the mitochondrion matrix. In terms of biological role, accessory subunit of the mitochondrial membrane respiratory chain NADH dehydrogenase (Complex I), that is believed not to be involved in catalysis. Complex I functions in the transfer of electrons from NADH to the respiratory chain. The immediate electron acceptor for the enzyme is believed to be ubiquinone. This is NADH dehydrogenase [ubiquinone] 1 alpha subcomplex subunit 9, mitochondrial from Arabidopsis thaliana (Mouse-ear cress).